Reading from the N-terminus, the 64-residue chain is Long neurotoxin MS2 (64 aa).

Intrachain disulfides connect cysteine 3-cysteine 24, cysteine 6-cysteine 11, cysteine 17-cysteine 41, cysteine 45-cysteine 57, and cysteine 58-cysteine 63.

The protein belongs to the three-finger toxin family. Ancestral subfamily. In terms of tissue distribution, expressed by the venom gland.

It is found in the secreted. Functionally, produces peripheral paralysis by blocking neuromuscular transmission at the postsynaptic site. Very weak inhibitor of the endogenous nicotinic acetylcholine receptors (nAChR) in the human rhabdomyosarcoma TE 671 cell line. Not toxic to mice by intraperitoneal injection or to zebrafish by injection at the back of the dorsolateral region. In Micrurus surinamensis (Surinam coral snake), this protein is Long neurotoxin MS2.